The chain runs to 94 residues: Alpha-elapitoxin-Nss2a (94 aa).

An N-terminal signal peptide occupies residues 1–21 (MKTLLLTLVVVTIVCLDLGDS). Intrachain disulfides connect Cys24/Cys41, Cys34/Cys62, Cys47/Cys51, Cys66/Cys77, and Cys78/Cys83.

The protein belongs to the three-finger toxin family. Long-chain subfamily. Type II alpha-neurotoxin sub-subfamily. As to expression, expressed by the venom gland.

It is found in the secreted. Functionally, binds with high affinity to muscular (alpha-1/CHRNA1) and neuronal (alpha-7/CHRNA7) nicotinic acetylcholine receptor (nAChR) and inhibits acetylcholine from binding to the receptor, thereby impairing neuromuscular and neuronal transmission. The protein is Alpha-elapitoxin-Nss2a of Notechis scutatus scutatus (Mainland tiger snake).